We begin with the raw amino-acid sequence, 181 residues long: Peptide deformylase (181 aa).

Residues Cys103 and His145 each contribute to the Fe cation site. Residue Glu146 is part of the active site. His149 is a binding site for Fe cation.

Belongs to the polypeptide deformylase family. It depends on Fe(2+) as a cofactor.

The enzyme catalyses N-terminal N-formyl-L-methionyl-[peptide] + H2O = N-terminal L-methionyl-[peptide] + formate. Its function is as follows. Removes the formyl group from the N-terminal Met of newly synthesized proteins. Requires at least a dipeptide for an efficient rate of reaction. N-terminal L-methionine is a prerequisite for activity but the enzyme has broad specificity at other positions. The protein is Peptide deformylase of Orientia tsutsugamushi (strain Boryong) (Rickettsia tsutsugamushi).